The following is a 1873-amino-acid chain: Kinesin-related protein 8 (1873 aa).

The Kinesin motor domain maps to 13-413; that stretch reads CVRVALRVRP…LKYAYRARNI (401 aa). 93-100 lines the ATP pocket; it reads GQTGSGKT. Disordered stretches follow at residues 231–302, 463–567, 778–797, 841–891, 930–1008, 1179–1207, 1244–1267, 1328–1360, and 1403–1467; these read NSPV…DERN, VSIP…SPTS, LDKD…YYED, KIDS…ARKT, KQRV…TEQL, PQPL…QRSS, LPSQ…STSS, TTTT…NNSS, and NNIT…PRPD. Positions 232 to 247 are enriched in low complexity; that stretch reads SPVTSSSTSSTSTSSS. Residues 280–297 are compositionally biased toward acidic residues; it reads IDEDEEDDEEDEDDDIMS. Residues 473–567 show a composition bias toward low complexity; sequence TPTLTNNNNN…NNTATPSPTS (95 aa). Residues 715 to 933 are a coiled coil; sequence FENDSEELSD…KEIEVHKQRV (219 aa). Composition is skewed to low complexity over residues 937 to 1005, 1182 to 1200, 1244 to 1254, 1348 to 1358, and 1423 to 1454; these read INSK…TPTT, LQSQ…NSEQ, LPSQQQLSSSQ, NNTNNNNNNNN, and SLQS…SNNN. WD repeat units follow at residues 1506–1546, 1548–1587, 1589–1628, 1636–1673, and 1677–1714; these read GHDG…NMLD, SSPG…NTNL, IFKT…KPLK, HHTG…LAQK, and PHHD…NLIN. Positions 1758–1780 are disordered; that stretch reads NNNNNNSSNNNKSSSAPSSTTSS. 2 WD repeats span residues 1805–1842 and 1844–1873; these read AHND…NSLL and GHES…IWKC.

Belongs to the TRAFAC class myosin-kinesin ATPase superfamily. Kinesin family.

The protein localises to the cytoplasm. The protein resides in the cytoskeleton. Its function is as follows. Microtubule-associated force-producing protein that plays a role in organelle transport. Its motor activity is directed toward the microtubule's plus end. Cooperates with kif10 and dynein to organize interphase microtubules. This Dictyostelium discoideum (Social amoeba) protein is Kinesin-related protein 8 (kif8).